The following is a 336-amino-acid chain: Zinc transporter ZIP11 (336 aa).

A run of 7 helical transmembrane segments spans residues 12-32 (LLGT…VFIF), 44-64 (LGFA…APAI), 75-95 (SFAF…VYLA), 188-208 (IMLL…AVGV), 258-278 (WYGQ…TIAI), 280-300 (LAEP…VYVV), and 316-336 (LASW…VGLG).

This sequence belongs to the ZIP transporter (TC 2.A.5) family.

Its subcellular location is the cell membrane. The protein localises to the nucleus. The protein resides in the cytoplasm. It localises to the golgi apparatus. In terms of biological role, functions as a cellular zinc transporter. In Xenopus tropicalis (Western clawed frog), this protein is Zinc transporter ZIP11 (slc39a11).